The primary structure comprises 391 residues: Elongation factor Tu (391 aa).

Residues 10 to 201 (KPHVNIGTIG…QVDAYIPTPV (192 aa)) form the tr-type G domain. The G1 stretch occupies residues 19-26 (GHVDHGKT). A GTP-binding site is contributed by 19-26 (GHVDHGKT). Threonine 26 is a Mg(2+) binding site. A G2 region spans residues 55–59 (GITIS). The segment at 76–79 (DCPG) is G3. Residues 76–80 (DCPGH) and 131–134 (NKVD) each bind GTP. A G4 region spans residues 131-134 (NKVD). Residues 169–171 (SAL) form a G5 region.

This sequence belongs to the TRAFAC class translation factor GTPase superfamily. Classic translation factor GTPase family. EF-Tu/EF-1A subfamily. Monomer.

The protein localises to the cytoplasm. It catalyses the reaction GTP + H2O = GDP + phosphate + H(+). In terms of biological role, GTP hydrolase that promotes the GTP-dependent binding of aminoacyl-tRNA to the A-site of ribosomes during protein biosynthesis. The sequence is that of Elongation factor Tu from Mesorhizobium japonicum (strain LMG 29417 / CECT 9101 / MAFF 303099) (Mesorhizobium loti (strain MAFF 303099)).